The primary structure comprises 163 residues: NADH-quinone oxidoreductase subunit I (163 aa).

4Fe-4S ferredoxin-type domains lie at 55 to 84 and 94 to 123; these read RRYPSGEERCIACKLCEAICPAQAITIEAE and TRYDIDMVKCIYCGLCQEACPVDAIVEGPN. The [4Fe-4S] cluster site is built by C64, C67, C70, C74, C103, C106, C109, and C113.

Belongs to the complex I 23 kDa subunit family. NDH-1 is composed of 14 different subunits. Subunits NuoA, H, J, K, L, M, N constitute the membrane sector of the complex. Requires [4Fe-4S] cluster as cofactor.

Its subcellular location is the cell inner membrane. The enzyme catalyses a quinone + NADH + 5 H(+)(in) = a quinol + NAD(+) + 4 H(+)(out). Its function is as follows. NDH-1 shuttles electrons from NADH, via FMN and iron-sulfur (Fe-S) centers, to quinones in the respiratory chain. The immediate electron acceptor for the enzyme in this species is believed to be ubiquinone. Couples the redox reaction to proton translocation (for every two electrons transferred, four hydrogen ions are translocated across the cytoplasmic membrane), and thus conserves the redox energy in a proton gradient. This Caulobacter vibrioides (strain ATCC 19089 / CIP 103742 / CB 15) (Caulobacter crescentus) protein is NADH-quinone oxidoreductase subunit I.